The chain runs to 368 residues: Polymerase delta-interacting protein 2 (368 aa).

The N-terminal 51 residues, 1 to 51, are a transit peptide targeting the mitochondrion; that stretch reads MAACTARRALAVGSRWWSRSLTGARWPRPLCAAAGAGAFSPASTTTTRRHL. In terms of domain architecture, ApaG spans 235–360; sequence RETTENIRVT…FSLESNKDEK (126 aa). Threonine 292 is subject to Phosphothreonine.

Interacts with PCNA and POLD2. Interacts with SSBP1. Interacts with PRIMPOL; leading to enhance DNA polymerase activity of PRIMPOL. Interacts with POLH. Interacts with POLD1; leading to stimulate DNA polymerase activity of POLD1.

It localises to the mitochondrion matrix. It is found in the nucleus. In terms of biological role, involved in DNA damage tolerance by regulating translesion synthesis (TLS) of templates carrying DNA damage lesions such as 8oxoG and abasic sites. May act by stimulating activity of DNA polymerases involved in TLS, such as PRIMPOL and polymerase delta (POLD1). The polypeptide is Polymerase delta-interacting protein 2 (Homo sapiens (Human)).